The following is a 620-amino-acid chain: 1-deoxy-D-xylulose-5-phosphate synthase (620 aa).

Thiamine diphosphate-binding positions include H80 and 121 to 123 (GHS). A Mg(2+)-binding site is contributed by D152. Residues 153-154 (GA), N181, Y288, and E370 contribute to the thiamine diphosphate site. A Mg(2+)-binding site is contributed by N181.

This sequence belongs to the transketolase family. DXPS subfamily. In terms of assembly, homodimer. The cofactor is Mg(2+). Thiamine diphosphate is required as a cofactor.

It carries out the reaction D-glyceraldehyde 3-phosphate + pyruvate + H(+) = 1-deoxy-D-xylulose 5-phosphate + CO2. Its pathway is metabolic intermediate biosynthesis; 1-deoxy-D-xylulose 5-phosphate biosynthesis; 1-deoxy-D-xylulose 5-phosphate from D-glyceraldehyde 3-phosphate and pyruvate: step 1/1. In terms of biological role, catalyzes the acyloin condensation reaction between C atoms 2 and 3 of pyruvate and glyceraldehyde 3-phosphate to yield 1-deoxy-D-xylulose-5-phosphate (DXP). This chain is 1-deoxy-D-xylulose-5-phosphate synthase, found in Salmonella agona (strain SL483).